Here is a 143-residue protein sequence, read N- to C-terminus: Shadow of prion protein (143 aa).

The signal sequence occupies residues M1–A24. N103 carries N-linked (GlcNAc...) asparagine glycosylation. The GPI-anchor amidated serine moiety is linked to residue S117. Positions G118–P143 are cleaved as a propeptide — removed in mature form.

The protein belongs to the SPRN family. In terms of processing, N-glycosylated. In terms of tissue distribution, mainly expressed in brain.

It localises to the cell membrane. Its function is as follows. Prion-like protein that has PrP(C)-like neuroprotective activity. May act as a modulator for the biological actions of normal and abnormal PrP. This chain is Shadow of prion protein (SPRN), found in Bos taurus (Bovine).